Reading from the N-terminus, the 194-residue chain is Translation machinery-associated protein 22 (194 aa).

The SUI1 domain maps to 102–173; that stretch reads VQIKRVERNK…DVQDWLLEVY (72 aa).

It belongs to the DENR family. Interacts with the 40S ribosomal subunit.

Its subcellular location is the cytoplasm. This is Translation machinery-associated protein 22 (tma22) from Aspergillus oryzae (strain ATCC 42149 / RIB 40) (Yellow koji mold).